A 353-amino-acid chain; its full sequence is Serine/threonine-protein kinase SRK2G (353 aa).

A Protein kinase domain is found at 4-260 (YDVVKDLGAG…LKEIKNHPWY (257 aa)). ATP is bound by residues 10-18 (LGAGNFGVA) and Lys33. Asp123 (proton acceptor) is an active-site residue. The segment at 299–353 (RNPAPSTSAVKSSGSGADEEEEEDVEAEVEEEEDDEDEYEKHVKEAQSCQESDKA) is disordered. A compositionally biased stretch (polar residues) spans 302–313 (APSTSAVKSSGS). Positions 315–336 (ADEEEEEDVEAEVEEEEDDEDE) are enriched in acidic residues. Over residues 337–353 (YEKHVKEAQSCQESDKA) the composition is skewed to basic and acidic residues.

It belongs to the protein kinase superfamily. Ser/Thr protein kinase family. As to expression, expressed in seedlings.

The protein resides in the nucleus. It catalyses the reaction L-seryl-[protein] + ATP = O-phospho-L-seryl-[protein] + ADP + H(+). It carries out the reaction L-threonyl-[protein] + ATP = O-phospho-L-threonyl-[protein] + ADP + H(+). The sequence is that of Serine/threonine-protein kinase SRK2G (SRK2G) from Arabidopsis thaliana (Mouse-ear cress).